Consider the following 189-residue polypeptide: Nuclear distribution protein nudE homolog 1 (189 aa).

Positions 4–121 (NLDLETAIQI…LRVSKEEATS (118 aa)) form a coiled coil. Basic and acidic residues predominate over residues 114–126 (VSKEEATSGETRR). The interval 114-139 (VSKEEATSGETRRNTRSLPSQNKKMK) is disordered.

Belongs to the nudE family. As to quaternary structure, self-associates. Interacts with PAC1.

The protein resides in the nucleus. It localises to the cytoplasm. It is found in the cytoskeleton. In terms of biological role, required for nuclear migration to the bud neck during cell division. Targets cytoplasmic dynein to microtubule plus ends thereby promoting dynein-mediated microtubule sliding along the bud cortex and consequently the movement of the mitotic spindle to the bud neck. This chain is Nuclear distribution protein nudE homolog 1 (NDL1), found in Saccharomyces cerevisiae (strain ATCC 204508 / S288c) (Baker's yeast).